Here is a 1077-residue protein sequence, read N- to C-terminus: ATP-dependent helicase/deoxyribonuclease subunit B (1077 aa).

The protein belongs to the helicase family. AddB/RexB type 2 subfamily. In terms of assembly, heterodimer of AddA and RexB. It depends on Mg(2+) as a cofactor.

The heterodimer acts as both an ATP-dependent DNA helicase and an ATP-dependent, dual-direction single-stranded exonuclease. Recognizes the chi site generating a DNA molecule suitable for the initiation of homologous recombination. This subunit has 5' -&gt; 3' nuclease activity but not helicase activity. This is ATP-dependent helicase/deoxyribonuclease subunit B from Streptococcus agalactiae serotype III (strain NEM316).